The following is a 658-amino-acid chain: MSNTVSLQFPDGSVREYDASMTGAALAESISKSLAKKAVAYAVDGTVRDLSDPLGASGKVEIITREDPRALELIRHDTAHVLAEAVQELFPGTQVTIGPVIENGFYYDFARNEPFTLDDLPVIEKKMREIIQRNKPFTKEVWSREKAKQVFSDKGESYKVELVDAIPAGQDLKIYYQGDWFDLCRGPHMASTGQIGNSFKLMKVAGAYWRGDANNPMLTRIYGTAFANDNDLQAYLHMLEEAEKRDHRRLGREMDLFHFQEEGPGVVFWHAKGWKMFQNLVSYMRRRLDSHGYQEVNAPQVLDKSLWETSGHWGWYRDNMFKVTVAGDDTDDDRVFALKPMNCPGHVQIFKHGLKSYRDLPIKLAEFGNVHRYEPSGALHGLMRVRGFTQDDAHIFCTEEQMAAECLRINDLILSVYKDFGFEEITIKLSTRPEKRVGSDELWDRAESVMMTVLEQIRQQSNNIKTGILPGEGAFYGPKFEYTLKDAIGREWQCGTTQVDFNLPERFGAFYIGADSEKKQPVMIHRAICGSMERFLGILIENFAGHMPLWFAPVQVVVATITSDADEYAKEAAAKLKAAGLQVVTDLRNEKINYKVREHSLQKVPVILVCGKREAEEKTVNMRRLGSRDQESMTLDEAIARLCEEATPPDLLRLKNAG.

The TGS domain maps to 1–64 (MSNTVSLQFP…GASGKVEIIT (64 aa)). The interval 246–548 (DHRRLGREMD…LIENFAGHMP (303 aa)) is catalytic. Zn(2+) is bound by residues Cys-343, His-394, and His-525.

This sequence belongs to the class-II aminoacyl-tRNA synthetase family. In terms of assembly, homodimer. The cofactor is Zn(2+).

The protein resides in the cytoplasm. It carries out the reaction tRNA(Thr) + L-threonine + ATP = L-threonyl-tRNA(Thr) + AMP + diphosphate + H(+). In terms of biological role, catalyzes the attachment of threonine to tRNA(Thr) in a two-step reaction: L-threonine is first activated by ATP to form Thr-AMP and then transferred to the acceptor end of tRNA(Thr). Also edits incorrectly charged L-seryl-tRNA(Thr). This Brucella canis (strain ATCC 23365 / NCTC 10854 / RM-666) protein is Threonine--tRNA ligase.